Consider the following 883-residue polypeptide: N,N'-diacetylchitobiase (883 aa).

An N-terminal signal peptide occupies residues 1-17 (MLKHSLIAASVITTLAG). Cys-18 carries the N-palmitoyl cysteine lipid modification. A lipid anchor (S-diacylglycerol cysteine) is attached at Cys-18. Disulfide bonds link Cys-54–Cys-64, Cys-394–Cys-402, and Cys-502–Cys-577. Glu-537 functions as the Proton donor in the catalytic mechanism.

It belongs to the glycosyl hydrolase 20 family. Post-translationally, this protein is probably a lipoprotein, its processing is inhibited by globomycin.

Its subcellular location is the cell outer membrane. It carries out the reaction Hydrolysis of terminal non-reducing N-acetyl-D-hexosamine residues in N-acetyl-beta-D-hexosaminides.. Its pathway is glycan degradation; chitin degradation. Functionally, hydrolysis of terminal, non-reducing N-acetyl-beta-D-glucosamine residues in chitobiose and higher analogs, and in glycoproteins. The protein is N,N'-diacetylchitobiase (chb) of Vibrio harveyi (Beneckea harveyi).